Reading from the N-terminus, the 222-residue chain is DNA ADP-ribosyl transferase (222 aa).

A DarT domain is found at 12-209; sequence TLIYHITHLN…PVRVRRSWYY (198 aa). NAD(+)-binding positions include 16-18, glycine 25, and leucine 33; that span reads HIT. The segment at 38–56 is NAD(+)-binding element; it reads RPPTQQNVAYGHIQAHRAQ. Residues 47-53 mediate DNA binding; the sequence is YGHIQAH. Residue arginine 54 coordinates NAD(+). Arginine 54 acts as the Proton acceptor in catalysis. DNA-binding regions lie at residues 78–83, 148–151, and 154–158; these read RSPMLY, SYWA, and REKKQ. Positions 119 to 160 are ADP-ribosylating turn-turn loop; it reads TDRHAAVQYVCFFHKLEHLKALDWQAIQASYWANVREKKQAE. Glutamate 160 is an active-site residue.

It belongs to the DarT ADP-ribosyltransferase family. As to quaternary structure, interacts with cognate antitoxin DarG (via C-terminus); this heterodimeric complex neutralizes the toxic effect of DarT by preventing ssDNA binding to DarT and consequently inactivating the toxin by direct protein-protein interactions.

It carries out the reaction a thymidine in DNA + NAD(+) = an N-(ADP-alpha-D-ribosyl)-thymidine in DNA + nicotinamide + H(+). In terms of biological role, toxic component of the hybrid type II/IV toxin-antitoxin (TA) system DarTG, which plays a crucial role in controlling bacterial growth and bacteriophage infection. Its toxic effect is neutralized by cognate antitoxin DarG. In case of phage infection, DarT toxin ADP-ribosylates DNA, which inhibits both viral DNA and RNA synthesis and leads to abortive infection. ADP-ribosylates ssDNA on the second thymidine of the consensus sequence 5'-TNTC-3'; the protein does not auto-modify. Has no activity on dsDNA in vitro. This leads to a decrease in DNA replication. Upon expression in E.coli inhibits cell growth, colony formation and induces the SOS response. Expression leads to bacteriostasis; however if cells grow over an hour in the presence of toxin, growth is no longer restored on antitoxin-inducing plates. In E.coli ADP-ribosylates genomic DNA (gDNA), which induces RecA expression (a marker for DNA damage). The polypeptide is DNA ADP-ribosyl transferase (Thermus aquaticus (strain ATCC BAA-2747 / Y51MC23)).